The sequence spans 623 residues: DNA mismatch repair protein MutL (623 aa).

Residues 353–368 show a composition bias toward polar residues; it reads AQQSAPRPANSYSPAS. The segment at 353 to 389 is disordered; sequence AQQSAPRPANSYSPASWRTAPPAPRSEWSPQTAQTAH.

The protein belongs to the DNA mismatch repair MutL/HexB family.

Its function is as follows. This protein is involved in the repair of mismatches in DNA. It is required for dam-dependent methyl-directed DNA mismatch repair. May act as a 'molecular matchmaker', a protein that promotes the formation of a stable complex between two or more DNA-binding proteins in an ATP-dependent manner without itself being part of a final effector complex. This is DNA mismatch repair protein MutL from Brucella melitensis biotype 2 (strain ATCC 23457).